The sequence spans 232 residues: 7-cyano-7-deazaguanine synthase (232 aa).

Residue C7–A17 coordinates ATP. The Zn(2+) site is built by C185, C193, C196, and C199.

It belongs to the QueC family. Zn(2+) serves as cofactor.

It carries out the reaction 7-carboxy-7-deazaguanine + NH4(+) + ATP = 7-cyano-7-deazaguanine + ADP + phosphate + H2O + H(+). It participates in purine metabolism; 7-cyano-7-deazaguanine biosynthesis. Catalyzes the ATP-dependent conversion of 7-carboxy-7-deazaguanine (CDG) to 7-cyano-7-deazaguanine (preQ(0)). This is 7-cyano-7-deazaguanine synthase from Brucella canis (strain ATCC 23365 / NCTC 10854 / RM-666).